A 226-amino-acid chain; its full sequence is Fibrillarin-like rRNA/tRNA 2'-O-methyltransferase (226 aa).

S-adenosyl-L-methionine is bound by residues 85–86 (TT), 104–105 (EF), 129–130 (DA), and 149–152 (DVAQ).

This sequence belongs to the methyltransferase superfamily. Fibrillarin family. As to quaternary structure, interacts with nop5. Component of box C/D small ribonucleoprotein (sRNP) particles that contain rpl7ae, FlpA and nop5, plus a guide RNA.

In terms of biological role, involved in pre-rRNA and tRNA processing. Utilizes the methyl donor S-adenosyl-L-methionine to catalyze the site-specific 2'-hydroxyl methylation of ribose moieties in rRNA and tRNA. Site specificity is provided by a guide RNA that base pairs with the substrate. Methylation occurs at a characteristic distance from the sequence involved in base pairing with the guide RNA. This Thermococcus sibiricus (strain DSM 12597 / MM 739) protein is Fibrillarin-like rRNA/tRNA 2'-O-methyltransferase.